The chain runs to 753 residues: 5-methyltetrahydropteroyltriglutamate--homocysteine methyltransferase (753 aa).

5-methyltetrahydropteroyltri-L-glutamate contacts are provided by residues 17–20 (RELK) and K117. Residues 431-433 (IGS) and E484 each bind L-homocysteine. L-methionine is bound by residues 431 to 433 (IGS) and E484. 5-methyltetrahydropteroyltri-L-glutamate is bound by residues 515–516 (RC) and W561. Residue D599 participates in L-homocysteine binding. D599 contributes to the L-methionine binding site. E605 contacts 5-methyltetrahydropteroyltri-L-glutamate. Zn(2+) is bound by residues H641, C643, and E665. The active-site Proton donor is the H694. C726 is a Zn(2+) binding site.

This sequence belongs to the vitamin-B12 independent methionine synthase family. Requires Zn(2+) as cofactor.

It carries out the reaction 5-methyltetrahydropteroyltri-L-glutamate + L-homocysteine = tetrahydropteroyltri-L-glutamate + L-methionine. It functions in the pathway amino-acid biosynthesis; L-methionine biosynthesis via de novo pathway; L-methionine from L-homocysteine (MetE route): step 1/1. Catalyzes the transfer of a methyl group from 5-methyltetrahydrofolate to homocysteine resulting in methionine formation. In Shigella boydii serotype 18 (strain CDC 3083-94 / BS512), this protein is 5-methyltetrahydropteroyltriglutamate--homocysteine methyltransferase.